We begin with the raw amino-acid sequence, 248 residues long: MARTFFVGGNFKLNGSKQSIKEIVERLNTADLADNVEVVICPPATYLDHAVSLVSHPQVTVGAQNAYTKASGAYTGENSVDQIKDVGAKWVILGHSERRTYFNEDDEQVAEKTAFALERGVSVILCIGETLDEKKAGVTLDVVKRQLTPVLEKVKDWTNVVIAYEPVWAIGTGLAATAEDAQDIHAAIRDFLAERTSRDVADAVRILYGGSANGANAASFRDKADVDGFLVGGASLKPEFVDIINSRR.

Residues Asn-10 and Lys-12 each coordinate substrate. Residue His-95 is the Electrophile of the active site. Glu-165 functions as the Proton acceptor in the catalytic mechanism.

It belongs to the triosephosphate isomerase family. As to quaternary structure, homodimer.

It catalyses the reaction D-glyceraldehyde 3-phosphate = dihydroxyacetone phosphate. Its pathway is carbohydrate biosynthesis; gluconeogenesis. It participates in carbohydrate degradation; glycolysis; D-glyceraldehyde 3-phosphate from glycerone phosphate: step 1/1. The sequence is that of Triosephosphate isomerase (TPI1) from Eremothecium gossypii (strain ATCC 10895 / CBS 109.51 / FGSC 9923 / NRRL Y-1056) (Yeast).